The following is a 464-amino-acid chain: Argininosuccinate lyase (464 aa).

The protein belongs to the lyase 1 family. Argininosuccinate lyase subfamily.

It is found in the cytoplasm. The enzyme catalyses 2-(N(omega)-L-arginino)succinate = fumarate + L-arginine. It participates in amino-acid biosynthesis; L-arginine biosynthesis; L-arginine from L-ornithine and carbamoyl phosphate: step 3/3. This is Argininosuccinate lyase from Moorella thermoacetica (strain ATCC 39073 / JCM 9320).